Consider the following 199-residue polypeptide: DNA dC-&gt;dU-editing enzyme APOBEC-3A (199 aa).

The 117-residue stretch at 27 to 143 folds into the CMP/dCMP-type deaminase domain; sequence GRHKTYLCYE…PLYKEALQML (117 aa). His70 provides a ligand contact to Zn(2+). The active-site Proton donor is the Glu72. The Zn(2+) site is built by Cys101 and Cys106.

The protein belongs to the cytidine and deoxycytidylate deaminase family. In terms of assembly, interacts with AGO2. Interacts with TRIB3 (via N-terminus). Requires Zn(2+) as cofactor. As to expression, expressed in peripheral leukocytes with higher expression in CD14-positive phagocytic cells. Highly expressed in keratinocytes and in periphery blood monocytes. Also detected in non-lymphoid tissues including lung and adipose tissues. Found at high levels in colorectal adenocarcinoma, Burkitt's lymphoma and chronic myelogenous leukemia.

Its subcellular location is the nucleus. It localises to the cytoplasm. It carries out the reaction a 2'-deoxycytidine in single-stranded DNA + H2O + H(+) = a 2'-deoxyuridine in single-stranded DNA + NH4(+). DNA deaminase (cytidine deaminase) with restriction activity against viruses, foreign DNA and mobility of retrotransposons. Exhibits antiviral activity against adeno-associated virus (AAV) and human T-cell leukemia virus type 1 (HTLV-1) and may inhibit the mobility of LTR and non-LTR retrotransposons. Selectively targets single-stranded DNA and can deaminate both methylcytosine and cytosine in foreign DNA. Can induce somatic hypermutation in the nuclear and mitochondrial DNA. May also play a role in the epigenetic regulation of gene expression through the process of active DNA demethylation. The protein is DNA dC-&gt;dU-editing enzyme APOBEC-3A (APOBEC3A) of Homo sapiens (Human).